Reading from the N-terminus, the 224-residue chain is Ribonuclease T (224 aa).

One can recognise an Exonuclease domain in the interval 20-194; sequence VVIDVETAGF…YDTERTAELF (175 aa). 4 residues coordinate Mg(2+): aspartate 23, glutamate 25, histidine 181, and aspartate 186. Histidine 181 acts as the Proton donor/acceptor in catalysis.

This sequence belongs to the RNase T family. In terms of assembly, homodimer. Mg(2+) is required as a cofactor.

Its function is as follows. Trims short 3' overhangs of a variety of RNA species, leaving a one or two nucleotide 3' overhang. Responsible for the end-turnover of tRNA: specifically removes the terminal AMP residue from uncharged tRNA (tRNA-C-C-A). Also appears to be involved in tRNA biosynthesis. The protein is Ribonuclease T of Enterobacter sp. (strain 638).